The primary structure comprises 235 residues: Acyl-protein thioesterase 1 (235 aa).

Residues serine 125, aspartate 181, and histidine 213 each act as charge relay system in the active site.

It belongs to the AB hydrolase superfamily. AB hydrolase 2 family.

It is found in the cytoplasm. The protein localises to the nucleus. It carries out the reaction S-hexadecanoyl-L-cysteinyl-[protein] + H2O = L-cysteinyl-[protein] + hexadecanoate + H(+). Hydrolyzes fatty acids from S-acylated cysteine residues in proteins with a strong preference for palmitoylated G-alpha proteins over other acyl substrates. Mediates the deacylation of G-alpha proteins such as GPA1 in vivo, but has weak or no activity toward palmitoylated Ras proteins. Has weak lysophospholipase activity in vitro; however such activity may not exist in vivo. This chain is Acyl-protein thioesterase 1, found in Gibberella zeae (strain ATCC MYA-4620 / CBS 123657 / FGSC 9075 / NRRL 31084 / PH-1) (Wheat head blight fungus).